Here is a 729-residue protein sequence, read N- to C-terminus: MTEAQTRTEPSESSESSEAVAPAITSAADSAPEAPPATTAPAIENPLPEDRYLNRELSWLDFNARVLALAADPSLPLLERAKFLAIFASNLDEFYMVRVAGLKRRDEMGLSVRSADGLSPREQLRRISERTQQIASRHAHVFLDSVRPALADEGIVIVTWAQLDDAERAKLSTYFHEQVFPVLTPLAVDPAHPFPFVSGLSLNLAITVKHPDDGGQHFARIKVPDNVDRFVELPARGDSPGVVRFLPMEELIAAFLTVLFPGLEIVEHHAFRITRNADFEVEEDRDEDLLQALERELARRRFGSPVRLEVSDDMTESMLELLLRELDVAPGDVVEVPGLLDLSSLWQIYSVDRPGLKDPPFVPATPSAFGERETPKSIFSALRDGDVLVHHPYDSFSTTVQRFIEQAAADPNVLAIKQTLYRTSGDSPIVNALIDAAEAGKQVVALVEIKARFDEQANIKWARALEQAGVHVVYGLIGLKTHCKTCLVVRREGSTIRRYCHIGTGNYNPKTARLYEDIGLLTAAPDIGADLTDLFNSLTGYSRKESYRNLLVAPYGVRRGIIERIDREIAATRDGAEGRIRLKANALVDEQVIDALYRASQAGVQVEVVVRGICALRPGEPGFSDNITVRSILGRFLEHSRIIHFRAIDEYWIGSADMMHRNLDRRVEVMAQVKDPRLTTQLNDIFDSAADPRTRCWELGSDGHWTALPQEGHSVRDHQISLMERRRHP.

A disordered region spans residues 1–46 (MTEAQTRTEPSESSESSEAVAPAITSAADSAPEAPPATTAPAIENP). Positions 25–42 (TSAADSAPEAPPATTAPA) are enriched in low complexity. Residue asparagine 90 coordinates ATP. Mg(2+) is bound by residues arginine 422 and arginine 452. Histidine 482 acts as the Phosphohistidine intermediate in catalysis. The ATP site is built by tyrosine 515, arginine 611, and histidine 639.

This sequence belongs to the polyphosphate kinase 1 (PPK1) family. The cofactor is Mg(2+). In terms of processing, an intermediate of this reaction is the autophosphorylated ppk in which a phosphate is covalently linked to a histidine residue through a N-P bond.

It catalyses the reaction [phosphate](n) + ATP = [phosphate](n+1) + ADP. Functionally, catalyzes the reversible transfer of the terminal phosphate of ATP to form a long-chain polyphosphate (polyP). The chain is Polyphosphate kinase from Mycolicibacterium gilvum (strain PYR-GCK) (Mycobacterium gilvum (strain PYR-GCK)).